Reading from the N-terminus, the 590-residue chain is Aspartate--tRNA(Asp/Asn) ligase (590 aa).

Glu-173 lines the L-aspartate pocket. Positions 197–200 are aspartate; the sequence is QIFK. Arg-219 serves as a coordination point for L-aspartate. ATP is bound by residues 219 to 221 and Gln-228; that span reads RDE. His-450 is a binding site for L-aspartate. ATP is bound at residue Glu-484. Arg-491 provides a ligand contact to L-aspartate. 536–539 is an ATP binding site; sequence GLDR.

The protein belongs to the class-II aminoacyl-tRNA synthetase family. Type 1 subfamily. In terms of assembly, homodimer.

It localises to the cytoplasm. The catalysed reaction is tRNA(Asx) + L-aspartate + ATP = L-aspartyl-tRNA(Asx) + AMP + diphosphate. Aspartyl-tRNA synthetase with relaxed tRNA specificity since it is able to aspartylate not only its cognate tRNA(Asp) but also tRNA(Asn). Reaction proceeds in two steps: L-aspartate is first activated by ATP to form Asp-AMP and then transferred to the acceptor end of tRNA(Asp/Asn). The sequence is that of Aspartate--tRNA(Asp/Asn) ligase from Coxiella burnetii (strain RSA 493 / Nine Mile phase I).